We begin with the raw amino-acid sequence, 770 residues long: MAYGWWRRRRRRWRRWRRRPWRRRWRTRRRRPARRRGRRRNVRRRRRGGRWRRRYRRWKRKGRRRKKAKIIIRQWQPNYRRRCNIVGYIPVLICGENTVSRNYATHSDDTNYPGPFGGGMTTDKFTLRILYDEYKRFMNYWTASNEDLDLCRYLGVNLYFFRHPDVDFIIKINTMPPFLDTELTAPSIHPGMLALDKRARWIPSLKSRPGKKHYIKIRVGAPRMFTDKWYPQTDLCDMVLLTVYATAADMQYPFGSPLTDSVVVNFQVLQSMYDKTISILPDEKSQREILLNKIASYIPFYNTTQTIAQLKPFIDAGNVTSGATATTWASYINTTKFTTATTTTYAYPGTNRPPVTMLTCNDSWYRGTVYNTQIQQLPIKAAKLYLEATKTLLGNTFTNEDYTLEYHGGLYSSIWLSPGRSYFETTGAYTDIKYNPFTDRGEGNMLWIDWLSKKNMNYDKVQSKCLISDLPLWAAAYGYVEFCAKSTGDQNIHMNARLLIRSPFTDPQLLVHTDPTKGFVPYSLNFGNGKMPGGSSNVPIRMRAKWYPTLFHQQEVLEALAQSGPFAYHSDIKKVSLGMKYRFKWIWGGNPVRQQVVRNPCKETHSSGNRVPRSLQIVDPKYNSPELTFHTWDFRRGLFGPKAIQRMQQQPTTTDIFSAGRKRPRRDTEVYHSSQEGEQKESLLFPPVKLLRRVPPWEDSQQEESGSQSSEEETQTVSQQLKQQLQQQRILGVKLRLLFNQVQKIQQNQDINPTLLPRGGDLASLFQIAP.

Disordered regions lie at residues 645–682 (QRMQQQPTTTDIFSAGRKRPRRDTEVYHSSQEGEQKES) and 697–717 (WEDSQQEESGSQSSEEETQTV). Positions 646-656 (RMQQQPTTTDI) are enriched in polar residues. Over residues 666 to 681 (RDTEVYHSSQEGEQKE) the composition is skewed to basic and acidic residues. The segment covering 703-717 (EESGSQSSEEETQTV) has biased composition (low complexity).

This sequence belongs to the anelloviridae capsid protein family.

The protein resides in the virion. Self-assembles to form an icosahedral capsid with a T=1 symmetry, about 30 nm in diameter, and consisting of 60 capsid proteins. The capsid encapsulates the genomic DNA. Capsid protein is involved in attachment and entry into the host cell. The sequence is that of Capsid protein from Homo sapiens (Human).